A 155-amino-acid chain; its full sequence is Cathelicidin-1 (155 aa).

A signal peptide spans 1-29; sequence METQRASLSLGRCSLWLLLLGLALPSASA. Q30 is modified (pyrrolidone carboxylic acid). A propeptide spanning residues 30–143 is cleaved from the precursor; it reads QVLSYREAVL…KQPWAPPQAA (114 aa). Cystine bridges form between C85-C96, C107-C124, and C146-C154.

This sequence belongs to the cathelicidin family.

Its subcellular location is the secreted. Its function is as follows. Potent microbicidal activity; active against S.aureus and E.coli. This Ovis aries (Sheep) protein is Cathelicidin-1 (CATHL1A).